A 255-amino-acid chain; its full sequence is MKVKVFNLEGEPVEEIELPKVFSTPFRPDLIRRAVIASWTHRIQPQGRDPLAGKRRVTENIGKGHGMARVERIKTPPRFAAFVPFARGGRRTHPPKVEKIIWEDINKKERRLAIMSAIAATANPDLVRARGHVVDNVPAFPLVVVDDLQKVFKTAQTREIFKKLGIWDDIERAKRNTKIRAGKGKMRGRRYKKAKGPLIVVAKNEGIVQGARNHPGVDVVTVDNLGVELLAPGTHPGRLTIWTKGAIERLKEIYG.

Belongs to the universal ribosomal protein uL4 family. As to quaternary structure, part of the 50S ribosomal subunit.

Its function is as follows. One of the primary rRNA binding proteins, this protein initially binds near the 5'-end of the 23S rRNA. It is important during the early stages of 50S assembly. It makes multiple contacts with different domains of the 23S rRNA in the assembled 50S subunit and ribosome. Forms part of the polypeptide exit tunnel. The sequence is that of Large ribosomal subunit protein uL4 from Thermococcus gammatolerans (strain DSM 15229 / JCM 11827 / EJ3).